A 263-amino-acid chain; its full sequence is Tryptophan synthase alpha chain (263 aa).

Catalysis depends on proton acceptor residues E47 and D58.

Belongs to the TrpA family. As to quaternary structure, tetramer of two alpha and two beta chains.

It is found in the plastid. The protein resides in the chloroplast. The catalysed reaction is (1S,2R)-1-C-(indol-3-yl)glycerol 3-phosphate + L-serine = D-glyceraldehyde 3-phosphate + L-tryptophan + H2O. It functions in the pathway amino-acid biosynthesis; L-tryptophan biosynthesis; L-tryptophan from chorismate: step 5/5. Functionally, the alpha subunit is responsible for the aldol cleavage of indoleglycerol phosphate to indole and glyceraldehyde 3-phosphate. In Pyropia yezoensis (Susabi-nori), this protein is Tryptophan synthase alpha chain.